Consider the following 380-residue polypeptide: Tetraacyldisaccharide 4'-kinase (380 aa).

ATP is bound at residue 51–58 (SVGGTGKT).

It belongs to the LpxK family.

It carries out the reaction a lipid A disaccharide + ATP = a lipid IVA + ADP + H(+). It participates in glycolipid biosynthesis; lipid IV(A) biosynthesis; lipid IV(A) from (3R)-3-hydroxytetradecanoyl-[acyl-carrier-protein] and UDP-N-acetyl-alpha-D-glucosamine: step 6/6. Functionally, transfers the gamma-phosphate of ATP to the 4'-position of a tetraacyldisaccharide 1-phosphate intermediate (termed DS-1-P) to form tetraacyldisaccharide 1,4'-bis-phosphate (lipid IVA). The sequence is that of Tetraacyldisaccharide 4'-kinase from Bacteroides thetaiotaomicron (strain ATCC 29148 / DSM 2079 / JCM 5827 / CCUG 10774 / NCTC 10582 / VPI-5482 / E50).